We begin with the raw amino-acid sequence, 315 residues long: WD repeat domain-containing protein 83 (315 aa).

7 WD repeats span residues 23–62 (CGQG…LLRT), 65–104 (GHGY…VVRK), 107–146 (GHAG…PEPV), 151–188 (EARD…LFSD), 190–228 (VGSP…LLGE), 231–272 (GHKN…LALA), and 275–313 (VGSG…AEDG).

This sequence belongs to the WD repeat MORG1 family. As to quaternary structure, interacts with EGLN3/PHD3. Interacts with ERK signaling proteins MAP2K1/MEK1, MAP2K2/MEK2, LAMTOR3, ARAF/Raf-1, MAPK1/ERK2 and MAPK3/ERK1. Identified in the spliceosome C complex. Interacts with PARD6B and CRB3. Interacts strongly with GTP-bound RRAGA but not with inactive GDP-bound. Interacts with p62/SQSTM1.

Its subcellular location is the cytoplasm. The protein resides in the lysosome. It is found in the nucleus. Functionally, molecular scaffold protein for various multimeric protein complexes. Acts as a module in the assembly of a multicomponent scaffold for the ERK pathway, linking ERK responses to specific agonists. At low concentrations it enhances ERK activation, whereas high concentrations lead to the inhibition of ERK activation. Also involved in response to hypoxia by acting as a negative regulator of HIF1A/HIF-1-alpha via its interaction with EGLN3/PHD3. May promote degradation of HIF1A. May act by recruiting signaling complexes to a specific upstream activator. May also be involved in pre-mRNA splicing. Participates in tight junction development by regulating apico-basal polarity, a key step in tissue development and organization. Mechanistically, regulates the translocation of PAR6-aPKC from the cytoplasm to the apical surface by acting as an adapter between PARD6B AND CRB3. Also acts as a negative regulator of mTORC1 under nutrient-rich conditions by binding to the active Rag GTPases to inhibit mTORC1 localization to the lysosome and phosphorylation of downstream targets. This facilitates constitutive basal autophagy during nutrient availability. The polypeptide is WD repeat domain-containing protein 83 (WDR83) (Homo sapiens (Human)).